Reading from the N-terminus, the 33-residue chain is Brevinin-2Rk (33 aa).

A disulfide bridge links Cys-27 with Cys-33.

In terms of tissue distribution, expressed by the skin glands.

It localises to the secreted. Functionally, antimicrobial peptide. The chain is Brevinin-2Rk from Pelophylax ridibundus (Marsh frog).